Here is a 414-residue protein sequence, read N- to C-terminus: Imidazolonepropionase (414 aa).

Residues His77 and His79 each contribute to the Fe(3+) site. Zn(2+) contacts are provided by His77 and His79. 3 residues coordinate 4-imidazolone-5-propanoate: Arg86, Tyr149, and His184. Tyr149 provides a ligand contact to N-formimidoyl-L-glutamate. Position 249 (His249) interacts with Fe(3+). Zn(2+) is bound at residue His249. Glu252 is a binding site for 4-imidazolone-5-propanoate. Asp323 is a Fe(3+) binding site. Position 323 (Asp323) interacts with Zn(2+). Asn325 and Gly327 together coordinate N-formimidoyl-L-glutamate. Ser328 serves as a coordination point for 4-imidazolone-5-propanoate.

This sequence belongs to the metallo-dependent hydrolases superfamily. HutI family. Zn(2+) serves as cofactor. The cofactor is Fe(3+).

Its subcellular location is the cytoplasm. The catalysed reaction is 4-imidazolone-5-propanoate + H2O = N-formimidoyl-L-glutamate. It participates in amino-acid degradation; L-histidine degradation into L-glutamate; N-formimidoyl-L-glutamate from L-histidine: step 3/3. In terms of biological role, catalyzes the hydrolytic cleavage of the carbon-nitrogen bond in imidazolone-5-propanoate to yield N-formimidoyl-L-glutamate. It is the third step in the universal histidine degradation pathway. The chain is Imidazolonepropionase from Phocaeicola vulgatus (strain ATCC 8482 / DSM 1447 / JCM 5826 / CCUG 4940 / NBRC 14291 / NCTC 11154) (Bacteroides vulgatus).